The primary structure comprises 1065 residues: MNKSENLLFAGSSLASQVHAAAVNGDKGALQRLIVGNSALKDKEDQFGRTPLMYCVLADRLDCADALLKAGADVNKTDHSQRTALHLAAQKGNYRFMKLLLTRRANWMQKDLEEMTPLHLTTRHRSPKCLALLLKFMAPGEVDTQDKNKQTALHWSAYYNNPEHVKLLIKHDSNIGIPDVEGKIPLHWAANHKDPSAVHTVRCILDAAPTESLLNWQDYEGRTPLHFAVADGNVTVVDVLTSYESCNITSYDNLFRTPLHWAALLGHAQIVHLLLERNKSGTIPSDSQGATPLHYAAQSNFAETVKVFLKHPSVKDDSDLEGRTSFMWAAGKGSDDVLRTMLSLKSDIDINMADKYGGTALHAAALSGHVSTVKLLLENNAQVDATDVMKHTPLFRACEMGHKDVIQTLIKGGARVDLVDQDGHSLLHWAALGGNADVCQILIENKINPNVQDYAGRTPLQCAAYGGYINCMAVLMENNADPNIQDKEGRTALHWSCNNGYLDAIKLLLDFAAFPNQMENNEERYTPLDYALLGERHEVIQFMLEHGALSIAAIQDIAAFKIQAVYKGYKVRKAFRDRKNLLMKHEQLRKDAAAKKREEENKRKEAEQQKGRRSPDSCRPQALPCLPSTQDVPSRQSRAPSKQPPAGNVAQGPEPRDSRGSPGGSLGGALQKEQHVSSDLQGTNSRRPNETAREHSKGQSACVHFRPNEGSDGSRHPGVPSVEKSRGETAGDERCAKGKGFVKQPSCIRVAGPDEKGEDSRRAAASLPPHDSHWKPSRRHDTEPKAKCAPQKRRTQELRGGRCSPAGSSRPGSARGEAVHAGQNPPHHRTPRNKVTQAKLTGGLYSHLPQSTEELRSGARRLETSTLSEDFQVSKETDPAPGPLSGQSVNIDLLPVELRLQIIQRERRRKELFRKKNKAAAVIQRAWRSYQLRKHLSHLRHMKQLGAGDVDRWRQESTALLLQVWRKELELKFPQTTAVSKAPKSPSKGTSGTKSTKHSVLKQIYGCSHEGKIHHPTRSVKASSVLRLNSVSNLQCIHLLENSGRSKNFSYNLQSATQPKNKTKP.

ANK repeat units lie at residues 13–42 (SLAS…ALKD), 47–76 (FGRT…DVNK), 80–110 (SQRT…WMQK), 113–144 (EEMT…EVDT), 148–177 (NKQT…NIGI), 181–213 (EGKI…TESL), 220–250 (EGRT…NITS), 254–283 (LFRT…SGTI), 288–317 (QGAT…VKDD), 321–350 (EGRT…DIDI), 356–385 (YGGT…QVDA), 389–418 (MKHT…RVDL), 422–451 (DGHS…NPNV), 455–484 (AGRT…DPNI), 488–517 (EGRT…FPNQ), and 523–553 (ERYT…SIAA). Position 75 is a 3-hydroxyasparagine (N75). A D-box 1 motif is present at residues 490-498 (RTALHWSCN). The IQ 1 domain maps to 555–584 (QDIAAFKIQAVYKGYKVRKAFRDRKNLLMK). Basic and acidic residues predominate over residues 589 to 616 (RKDAAAKKREEENKRKEAEQQKGRRSPD). Disordered stretches follow at residues 589–833 (RKDA…TPRN) and 847–886 (HLPQ…PLSG). The span at 627-640 (PSTQDVPSRQSRAP) shows a compositional bias: polar residues. At S661 the chain carries Phosphoserine. Residues 677-686 (SSDLQGTNSR) are compositionally biased toward polar residues. Basic and acidic residues-rich tracts occupy residues 687-697 (RPNETAREHSK), 706-715 (RPNEGSDGSR), 723-736 (EKSR…ERCA), 752-762 (GPDEKGEDSRR), 770-786 (HDSH…EPKA), and 853-863 (EELRSGARRLE). Positions 909-917 (RKELFRKKN) match the D-box 2 motif. The 30-residue stretch at 916-945 (KNKAAAVIQRAWRSYQLRKHLSHLRHMKQL) folds into the IQ 2 domain. Positions 976 to 999 (TTAVSKAPKSPSKGTSGTKSTKHS) are disordered. Residues 983 to 994 (PKSPSKGTSGTK) are compositionally biased toward low complexity.

Binds calmodulin via its IQ domains. Interacts with APC2. Interacts with alpha-, beta-, and gamma-catenin. Interacts with N-cadherin (CDH2). Interacts with microtubules. Interacts with NPHP1. Interacts with DVL1, PRICKLE (PRICKLE1 or PRICKLE2) and Strabismus (VANGL1 or VANGL2). Interacts with IQCB1; the interaction likely requires additional interactors. Component of a complex containing at least ANKS6, INVS, NEK8 and NPHP3. ANKS6 may organize complex assembly by linking INVS and NPHP3 to NEK8 and INVS may target the complex to the proximal ciliary axoneme. Post-translationally, may be ubiquitinated via its interaction with APC2. Hydroxylated at Asn-75, most probably by HIF1AN. In terms of tissue distribution, widely expressed. Strongly expressed in the primary cilia of renal tubular cells.

It localises to the cytoplasm. The protein resides in the cytoskeleton. It is found in the spindle. The protein localises to the membrane. Its subcellular location is the nucleus. It localises to the cell projection. The protein resides in the cilium. In terms of biological role, required for normal renal development and establishment of left-right axis. Probably acts as a molecular switch between different Wnt signaling pathways. Inhibits the canonical Wnt pathway by targeting cytoplasmic disheveled (DVL1) for degradation by the ubiquitin-proteasome. This suggests that it is required in renal development to oppose the repression of terminal differentiation of tubular epithelial cells by Wnt signaling. Involved in the organization of apical junctions in kidney cells together with NPHP1, NPHP4 and RPGRIP1L/NPHP8. Does not seem to be strictly required for ciliogenesis. This Homo sapiens (Human) protein is Inversin (INVS).